Reading from the N-terminus, the 394-residue chain is Protein maelstrom (394 aa).

The HMG box DNA-binding region spans A2–N69. Residues T44–A93 are disordered. Over residues Q73–A93 the composition is skewed to basic and acidic residues.

The protein belongs to the maelstrom family.

It localises to the cytoplasm. The protein resides in the nucleus. Functionally, involved both in the piRNA and miRNA metabolic processes. As a component of the meiotic nuage, plays a central role during oogenesis by repressing transposable elements and preventing their mobilization, which is essential for the germline integrity. Repression of transposable elements is mediated via the piRNA metabolic process, which mediates the repression of transposable elements during meiosis by forming complexes composed of piRNAs and Piwi proteins and governs the repression of transposons. As a nuclear component, it is required for proper differentiation in the germline stem cell (GSC) lineage by repressing microRNA-7 (miR-7), thereby acting as an indirect regulator of bag-of-marbles (Bam). Acts by binding to the promoter of miR-7 gene and repressing its expression; miR-7 repression alleviates the Bam repression by miR-7, thereby allowing differentiation in the germline stem cell (GSC) lineage. The chain is Protein maelstrom (mael) from Drosophila sechellia (Fruit fly).